The sequence spans 136 residues: Neuropeptide CCHamide-2 (136 aa).

The N-terminal stretch at 1 to 24 (MKSTISLLLVVICTVVLAAQQSQA) is a signal peptide. Cysteine 28 and cysteine 35 are joined by a disulfide. A Histidine amide modification is found at histidine 39. Residues 42 to 78 (RSLSPGSGSGTGVGGGMGEAASGGQEPDYVRPNGLLP) are disordered. A propeptide spanning residues 43–136 (SLSPGSGSGT…ANSAELNGVN (94 aa)) is cleaved from the precursor. Gly residues predominate over residues 48-59 (SGSGTGVGGGMG).

In terms of tissue distribution, expressed in endocrine cells of the larval midgut (at protein level). Also expressed in endocrine cells of the midgut of adult males and females (at protein level). In the midgut, expression occurs mainly in the anterior region (at protein level). In the larval central nervous system, expressed in about 40 neurons in the brain hemispheres and ventral nerve cord (at protein level). Highly expressed in larval and adult gut with low levels in larval and adult brain. Very little expression in the larval fat body. However, another study shows high levels of expression in the larval fat body as well as the larval gut with low levels in the larval central nervous system.

The protein resides in the secreted. Functionally, ligand for the CCHamide-2 receptor CCHa2-R. In one study, shown to be an orexigenic peptide which induces appetite and stimulates food intake, leading to the release of insulin-like peptides which stimulate growth. In another study, shown to be a nutrient-sensitive peptide derived from peripheral tissues which controls growth by directly regulating the production and release of insulin-like peptides. The protein is Neuropeptide CCHamide-2 of Drosophila melanogaster (Fruit fly).